We begin with the raw amino-acid sequence, 420 residues long: Serine--tRNA ligase (420 aa).

Threonine 227–glutamate 229 lines the L-serine pocket. Residues arginine 258 to glutamate 260 and valine 274 each bind ATP. Glutamate 281 serves as a coordination point for L-serine. ATP is bound at residue glutamate 345–serine 348. Threonine 379 is an L-serine binding site.

Belongs to the class-II aminoacyl-tRNA synthetase family. Type-1 seryl-tRNA synthetase subfamily. Homodimer. The tRNA molecule binds across the dimer.

The protein resides in the cytoplasm. The catalysed reaction is tRNA(Ser) + L-serine + ATP = L-seryl-tRNA(Ser) + AMP + diphosphate + H(+). The enzyme catalyses tRNA(Sec) + L-serine + ATP = L-seryl-tRNA(Sec) + AMP + diphosphate + H(+). It participates in aminoacyl-tRNA biosynthesis; selenocysteinyl-tRNA(Sec) biosynthesis; L-seryl-tRNA(Sec) from L-serine and tRNA(Sec): step 1/1. In terms of biological role, catalyzes the attachment of serine to tRNA(Ser). Is also able to aminoacylate tRNA(Sec) with serine, to form the misacylated tRNA L-seryl-tRNA(Sec), which will be further converted into selenocysteinyl-tRNA(Sec). The chain is Serine--tRNA ligase from Acidothermus cellulolyticus (strain ATCC 43068 / DSM 8971 / 11B).